The chain runs to 812 residues: 1,4-alpha-glucan branching enzyme GlgB (812 aa).

A compositionally biased stretch (polar residues) spans 1-11 (MNNGDVNNGTA). Positions 1–83 (MNNGDVNNGT…SALPADPPAV (83 aa)) are disordered. The span at 49–64 (SSASAQPGQTADDPAV) shows a compositional bias: low complexity. Residues 65–83 (PSAPPSAPPSALPADPPAV) are compositionally biased toward pro residues. Catalysis depends on D490, which acts as the Nucleophile. The active-site Proton donor is the E543.

It belongs to the glycosyl hydrolase 13 family. GlgB subfamily. Monomer.

It catalyses the reaction Transfers a segment of a (1-&gt;4)-alpha-D-glucan chain to a primary hydroxy group in a similar glucan chain.. The protein operates within glycan biosynthesis; glycogen biosynthesis. Functionally, catalyzes the formation of the alpha-1,6-glucosidic linkages in glycogen by scission of a 1,4-alpha-linked oligosaccharide from growing alpha-1,4-glucan chains and the subsequent attachment of the oligosaccharide to the alpha-1,6 position. The chain is 1,4-alpha-glucan branching enzyme GlgB from Frankia casuarinae (strain DSM 45818 / CECT 9043 / HFP020203 / CcI3).